Here is a 658-residue protein sequence, read N- to C-terminus: Exoribonuclease 2 (658 aa).

An RNB domain is found at 189–530; sequence REDLTSLYFT…VNHRLIKQVL (342 aa). Residues 576-658 enclose the S1 motif domain; sequence AVEFDCEIAD…ETRSIVGNII (83 aa).

It belongs to the RNR ribonuclease family. RNase II subfamily.

Its subcellular location is the cytoplasm. It carries out the reaction Exonucleolytic cleavage in the 3'- to 5'-direction to yield nucleoside 5'-phosphates.. Functionally, involved in mRNA degradation. Hydrolyzes single-stranded polyribonucleotides processively in the 3' to 5' direction. The sequence is that of Exoribonuclease 2 from Actinobacillus pleuropneumoniae serotype 5b (strain L20).